We begin with the raw amino-acid sequence, 514 residues long: LWamide neuropeptides (514 aa).

The first 22 residues, 1–22 (MALKCHLVLLAITLLLAQCSGS), serve as a signal peptide directing secretion. The span at 23-53 (VDKKDSTTNHLDEKKTDSTEAHIVQETDALK) shows a compositional bias: basic and acidic residues. The propeptide occupies 23–75 (VDKKDSTTNHLDEKKTDSTEAHIVQETDALKENSYLGAEEESKEEDKKRSAAP). The tract at residues 23–180 (VDKKDSTTNH…PGLWGRSADA (158 aa)) is disordered. A tryptophan amide mark is found at Trp-81 and Trp-90. The propeptide occupies 93–97 (SADAG). Tryptophan amide occurs at positions 102 and 111. Positions 114–118 (SADAG) are excised as a propeptide. Trp-123 and Trp-132 each carry tryptophan amide. Positions 135–139 (SADAG) are excised as a propeptide. Tryptophan amide occurs at positions 144 and 153. The propeptide occupies 156-160 (SADAG). Tryptophan amide occurs at positions 165 and 174. A propeptide spanning residues 177–181 (SADAR) is cleaved from the precursor. Tryptophan amide is present on Trp-186. The propeptide occupies 190-199 (EIYALWGGKR). Trp-205 is subject to Tryptophan amide. Positions 208–212 (SADPG) are excised as a propeptide. Trp-217 carries the tryptophan amide modification. Residues 221-230 (ELVGLWGGKR) constitute a propeptide that is removed on maturation. Residue Trp-236 is modified to Tryptophan amide. Residues 239 to 243 (SAEAG) constitute a propeptide that is removed on maturation. Residues Trp-248 and Trp-257 each carry the tryptophan amide modification. The interval 258–475 (GRSADPLQPG…GRSAGSGQLG (218 aa)) is disordered. Positions 260–264 (SADPL) are excised as a propeptide. 2 positions are modified to tryptophan amide: Trp-269 and Trp-278. The propeptide occupies 281 to 284 (SADP). A tryptophan amide mark is found at Trp-290 and Trp-299. The propeptide occupies 302-305 (SADP). Tryptophan amide occurs at positions 311 and 320. A propeptide spanning residues 323 to 326 (SADP) is cleaved from the precursor. Tryptophan amide is present on residues Trp-332 and Trp-341. A propeptide spanning residues 344-347 (SADP) is cleaved from the precursor. Trp-353 carries the tryptophan amide modification. Residues 356–366 (SPGLWGRSADP) constitute a propeptide that is removed on maturation. The residue at position 372 (Trp-372) is a Tryptophan amide. Positions 376-387 (QNPGFWGRSADP) are excised as a propeptide. Tryptophan amide occurs at positions 393 and 402. Positions 405 to 408 (SADP) are excised as a propeptide. A tryptophan amide mark is found at Trp-414 and Trp-423. The propeptide occupies 426–429 (SADP). A tryptophan amide mark is found at Trp-435 and Trp-444. A propeptide spanning residues 447–450 (SADP) is cleaved from the precursor. Residues Trp-456 and Trp-465 each carry the tryptophan amide modification. Positions 468–472 (SAGSG) are excised as a propeptide. Tryptophan amide is present on residues Trp-477 and Trp-487. The segment at 489-514 (RSAEPPQFEDLEDLKKKSAIPQPKGQ) is disordered. The propeptide occupies 490-514 (SAEPPQFEDLEDLKKKSAIPQPKGQ).

The protein belongs to the LWamide neuropeptide family.

It is found in the secreted. Its function is as follows. Metamorphosin A may be part of an internal signaling system involved in control of metamorphosis. The chain is LWamide neuropeptides from Anthopleura elegantissima (Green aggregating anemone).